We begin with the raw amino-acid sequence, 260 residues long: Outer membrane protein assembly factor BamD (260 aa).

The N-terminal stretch at 1–19 is a signal peptide; the sequence is MRKLKSFTFIALTAFAITA. Residue C20 is the site of N-palmitoyl cysteine attachment. The S-diacylglycerol cysteine moiety is linked to residue C20.

It belongs to the BamD family. Part of the Bam complex.

It localises to the cell outer membrane. Part of the outer membrane protein assembly complex, which is involved in assembly and insertion of beta-barrel proteins into the outer membrane. The sequence is that of Outer membrane protein assembly factor BamD from Pasteurella multocida (strain Pm70).